The primary structure comprises 421 residues: UDP-N-acetylglucosamine 1-carboxyvinyltransferase (421 aa).

Residue 22–23 coordinates phosphoenolpyruvate; it reads KN. Arginine 91 is a UDP-N-acetyl-alpha-D-glucosamine binding site. Catalysis depends on cysteine 115, which acts as the Proton donor. 2-(S-cysteinyl)pyruvic acid O-phosphothioketal is present on cysteine 115. Residues 120–124, 160–163, aspartate 305, and isoleucine 327 each bind UDP-N-acetyl-alpha-D-glucosamine; these read RPVDL and KVSV.

It belongs to the EPSP synthase family. MurA subfamily.

The protein localises to the cytoplasm. The enzyme catalyses phosphoenolpyruvate + UDP-N-acetyl-alpha-D-glucosamine = UDP-N-acetyl-3-O-(1-carboxyvinyl)-alpha-D-glucosamine + phosphate. Its pathway is cell wall biogenesis; peptidoglycan biosynthesis. Functionally, cell wall formation. Adds enolpyruvyl to UDP-N-acetylglucosamine. The polypeptide is UDP-N-acetylglucosamine 1-carboxyvinyltransferase (Photorhabdus laumondii subsp. laumondii (strain DSM 15139 / CIP 105565 / TT01) (Photorhabdus luminescens subsp. laumondii)).